The primary structure comprises 294 residues: MAQTGTERVKRGMAEMQKGGVIMDVINAEQAKIAEEAGAVAVMALERVPADIRAAGGVARMADPTIVEEVMNAVSIPVMAKARIGHIVEARVLEAMGVDYIDESEVLTPADEEFHLNKNEYTVPFVCGCRDLGEATRRIAEGASMLRTKGEPGTGNIVEAVRHMRKVNAQVRKVVAMSEDELMTEAKNLGAPYELLLQIKKDGKLPVVNFAAGGVATPADAALMMQLGADGVFVGSGIFKSDNPAKFAKAIVEATTHFTDYKLIAELSKELGTAMKGIEISNLLPEQRMQERGW.

D24 provides a ligand contact to D-ribose 5-phosphate. Catalysis depends on K81, which acts as the Schiff-base intermediate with D-ribose 5-phosphate. G153 lines the D-ribose 5-phosphate pocket. R165 is a D-glyceraldehyde 3-phosphate binding site. D-ribose 5-phosphate is bound by residues G214 and 235-236; that span reads GS.

This sequence belongs to the PdxS/SNZ family. In terms of assembly, homohexamer and homododecamer. In the presence of PdxT, forms a dodecamer of heterodimers.

The enzyme catalyses aldehydo-D-ribose 5-phosphate + D-glyceraldehyde 3-phosphate + L-glutamine = pyridoxal 5'-phosphate + L-glutamate + phosphate + 3 H2O + H(+). It functions in the pathway cofactor biosynthesis; pyridoxal 5'-phosphate biosynthesis. Functionally, catalyzes the formation of pyridoxal 5'-phosphate from ribose 5-phosphate (RBP), glyceraldehyde 3-phosphate (G3P) and ammonia. The ammonia is provided by the PdxT subunit. Can also use ribulose 5-phosphate and dihydroxyacetone phosphate as substrates, resulting from enzyme-catalyzed isomerization of RBP and G3P, respectively. This is Pyridoxal 5'-phosphate synthase subunit PdxS from Bacillus subtilis (strain 168).